A 905-amino-acid chain; its full sequence is Coatomer subunit beta' (905 aa).

8 WD repeats span residues alanine 13–threonine 52, valine 55–methionine 94, alanine 97–glutamine 136, glycine 140–threonine 180, glycine 183–threonine 224, glycine 227–threonine 266, serine 350–phenylalanine 388, and serine 390–lysine 425. The residue at position 627 (lysine 627) is an N6-acetyllysine. The WD 9 repeat unit spans residues isoleucine 746–lysine 783. The disordered stretch occupies residues glutamate 837–aspartate 905. Serine 859 carries the post-translational modification Phosphoserine. A coiled-coil region spans residues glutamine 867–isoleucine 891. A compositionally biased stretch (acidic residues) spans glutamate 878–aspartate 905.

It belongs to the WD repeat COPB2 family. As to quaternary structure, oligomeric complex that consists of at least the alpha, beta, beta', gamma, delta, epsilon and zeta subunits. Probably interacts with PEX11A. Interacts with JAGN1. Interacts with SCYL1.

It is found in the cytoplasm. The protein localises to the cytosol. It localises to the golgi apparatus membrane. Its subcellular location is the cytoplasmic vesicle. The protein resides in the COPI-coated vesicle membrane. Functionally, the coatomer is a cytosolic protein complex that binds to dilysine motifs and reversibly associates with Golgi non-clathrin-coated vesicles, which further mediate biosynthetic protein transport from the ER, via the Golgi up to the trans Golgi network. Coatomer complex is required for budding from Golgi membranes, and is essential for the retrograde Golgi-to-ER transport of dilysine-tagged proteins. In mammals, the coatomer can only be recruited by membranes associated to ADP-ribosylation factors (ARFs), which are small GTP-binding proteins; the complex also influences the Golgi structural integrity, as well as the processing, activity, and endocytic recycling of LDL receptors. Its function is as follows. This coatomer complex protein, essential for Golgi budding and vesicular trafficking, is a selective binding protein (RACK) for protein kinase C, epsilon type. It binds to Golgi membranes in a GTP-dependent manner. The protein is Coatomer subunit beta' (Copb2) of Rattus norvegicus (Rat).